Here is a 160-residue protein sequence, read N- to C-terminus: Thy-1 membrane glycoprotein (160 aa).

Positions 1–19 (MNPTVSIAVILTVLQAAHC) are cleaved as a signal peptide. The residue at position 20 (Gln20) is a Pyrrolidone carboxylic acid. Residues 20–120 (QMIRDLSACL…YTGNQIKNIT (101 aa)) form the Ig-like V-type domain. Intrachain disulfides connect Cys28–Cys129 and Cys38–Cys103. 3 N-linked (GlcNAc...) asparagine glycosylation sites follow: Asn42, Asn78, and Asn118. Cys129 is lipidated: GPI-anchor amidated cysteine. The propeptide at 130 to 160 (VRLSLLIQNTSWLLLLLLSLPLLQAVDFVSL) is removed in mature form. An N-linked (GlcNAc...) asparagine glycan is attached at Asn138.

In terms of processing, the N-terminus is blocked. In terms of tissue distribution, forebrain, cerebellum and tectum.

It localises to the cell membrane. May play a role in cell-cell or cell-ligand interactions during synaptogenesis and other events in the brain. The chain is Thy-1 membrane glycoprotein (THY1) from Gallus gallus (Chicken).